A 463-amino-acid polypeptide reads, in one-letter code: Chromosomal replication initiator protein DnaA (463 aa).

The domain I, interacts with DnaA modulators stretch occupies residues Met1 to Thr83. The domain II stretch occupies residues Thr83–Ser124. A domain III, AAA+ region region spans residues Thr125–Ser343. ATP-binding residues include Gly171, Gly173, Lys174, and Thr175. A domain IV, binds dsDNA region spans residues Asn344–Asn463.

Belongs to the DnaA family. Oligomerizes as a right-handed, spiral filament on DNA at oriC.

The protein resides in the cytoplasm. Functionally, plays an essential role in the initiation and regulation of chromosomal replication. ATP-DnaA binds to the origin of replication (oriC) to initiate formation of the DNA replication initiation complex once per cell cycle. Binds the DnaA box (a 9 base pair repeat at the origin) and separates the double-stranded (ds)DNA. Forms a right-handed helical filament on oriC DNA; dsDNA binds to the exterior of the filament while single-stranded (ss)DNA is stabiized in the filament's interior. The ATP-DnaA-oriC complex binds and stabilizes one strand of the AT-rich DNA unwinding element (DUE), permitting loading of DNA polymerase. After initiation quickly degrades to an ADP-DnaA complex that is not apt for DNA replication. Binds acidic phospholipids. The polypeptide is Chromosomal replication initiator protein DnaA (Rickettsia peacockii (strain Rustic)).